Consider the following 157-residue polypeptide: Endoribonuclease YbeY (157 aa).

3 residues coordinate Zn(2+): His121, His125, and Asp131.

It belongs to the endoribonuclease YbeY family. Zn(2+) is required as a cofactor.

The protein localises to the cytoplasm. In terms of biological role, single strand-specific metallo-endoribonuclease involved in late-stage 70S ribosome quality control and in maturation of the 3' terminus of the 16S rRNA. The polypeptide is Endoribonuclease YbeY (Salinibacter ruber (strain DSM 13855 / M31)).